A 261-amino-acid chain; its full sequence is Thioredoxin-like protein HCF164, chloroplastic (261 aa).

A chloroplast-targeting transit peptide spans 1 to 40 (MARLVFSLNLPSSHGFNLSPRNLQSFFVTQTGAPRFRAVR). The tract at residues 39–91 (VRCKPNPESSETKQEKLVIDNGETSSASKEVESSSSVADSSSSSSSGFPESPN) is disordered. A compositionally biased stretch (low complexity) spans 63–84 (SSASKEVESSSSVADSSSSSSS). Positions 101-229 (VTVIAALSLF…LVENVNALAA (129 aa)) constitute a Thioredoxin domain. Active-site nucleophile residues include Cys-150 and Cys-153. Cysteines 150 and 153 form a disulfide.

Belongs to the thioredoxin family. Interacts in vitro with LTO1.

Its subcellular location is the plastid. The protein localises to the chloroplast thylakoid membrane. In terms of biological role, thiol-disulfide oxidoreductase that participates in various redox reactions in the chloroplast. Mediates the reduction of PSI-N in the thylakoid lumen. May interact and probably reduce other target proteins of the thylakoid membrane, such as FTSH2, FTSH8, LHCB5, atpA, atpB, atpE, petA and petC. Involved in the biogenesis of the plastid cytochrome b6f complex. Reducing equivalents are provided by stromal M-type thioredoxins and probably transduced through the thylakoid membrane by CCDA. Possesses low insulin disulfide bonds reducing activity. The polypeptide is Thioredoxin-like protein HCF164, chloroplastic (Arabidopsis thaliana (Mouse-ear cress)).